We begin with the raw amino-acid sequence, 597 residues long: UvrABC system protein C (597 aa).

One can recognise a GIY-YIG domain in the interval 15–93 (NSPGVYQYFD…IKKHQPRFNV (79 aa)). In terms of domain architecture, UVR spans 207–242 (KDSLQRFRNQMKQHSEKMEFEDAQRIKNKIDVLENY).

This sequence belongs to the UvrC family. Interacts with UvrB in an incision complex.

It localises to the cytoplasm. The UvrABC repair system catalyzes the recognition and processing of DNA lesions. UvrC both incises the 5' and 3' sides of the lesion. The N-terminal half is responsible for the 3' incision and the C-terminal half is responsible for the 5' incision. This Christiangramia forsetii (strain DSM 17595 / CGMCC 1.15422 / KT0803) (Gramella forsetii) protein is UvrABC system protein C.